Consider the following 377-residue polypeptide: Endoplasmic reticulum-Golgi intermediate compartment protein 2 (377 aa).

Topologically, residues 1–33 are cytoplasmic; that stretch reads MRRLNRKKTLSLVKELDAFPKVPESYVETSASG. A helical membrane pass occupies residues 34–54; sequence GTVSLIAFTTMALLTIMEFSV. The Lumenal portion of the chain corresponds to 55–319; that stretch reads YQDTWMKYEY…PFWQFFVRLC (265 aa). A helical transmembrane segment spans residues 320 to 340; that stretch reads GIVGGIFSTTGMLHGIGKFIV. Over 341-377 the chain is Cytoplasmic; the sequence is EIICCRFRLGSYKPVNSVPFEDGHTDNHLPLLENNTH.

This sequence belongs to the ERGIC family. In terms of assembly, may form a heteromeric complex composed of ERGIC1, ERGIC2 and ERGIC3. Interacts with ERGIC3, the interaction is required for the stable expression of both proteins. May interact with EEF1A1.

The protein localises to the endoplasmic reticulum-Golgi intermediate compartment membrane. It is found in the golgi apparatus. The protein resides in the cis-Golgi network membrane. Its subcellular location is the endoplasmic reticulum membrane. It localises to the cytoplasm. The protein localises to the nucleus. Functionally, possible role in transport between endoplasmic reticulum and Golgi. This chain is Endoplasmic reticulum-Golgi intermediate compartment protein 2 (ERGIC2), found in Macaca fascicularis (Crab-eating macaque).